The sequence spans 114 residues: Probable 4-amino-4-deoxy-L-arabinose-phosphoundecaprenol flippase subunit ArnE (114 aa).

The EamA domain maps to R39–Q112. 3 consecutive transmembrane segments (helical) span residues P41–L61, L64–A84, and P91–G111.

Belongs to the ArnE family. Heterodimer of ArnE and ArnF.

The protein resides in the cell inner membrane. Its pathway is bacterial outer membrane biogenesis; lipopolysaccharide biosynthesis. Functionally, translocates 4-amino-4-deoxy-L-arabinose-phosphoundecaprenol (alpha-L-Ara4N-phosphoundecaprenol) from the cytoplasmic to the periplasmic side of the inner membrane. This Pseudomonas fluorescens (strain Pf0-1) protein is Probable 4-amino-4-deoxy-L-arabinose-phosphoundecaprenol flippase subunit ArnE.